We begin with the raw amino-acid sequence, 273 residues long: NH(3)-dependent NAD(+) synthetase (273 aa).

ATP is bound at residue 45 to 52; it reads GISGGQDS. D51 is a Mg(2+) binding site. Residue R139 coordinates deamido-NAD(+). Position 159 (T159) interacts with ATP. E164 is a Mg(2+) binding site. Residues K172 and D179 each coordinate deamido-NAD(+). ATP is bound by residues K188 and T210. A deamido-NAD(+)-binding site is contributed by 259 to 260; sequence HK.

It belongs to the NAD synthetase family. In terms of assembly, homodimer.

The enzyme catalyses deamido-NAD(+) + NH4(+) + ATP = AMP + diphosphate + NAD(+) + H(+). The protein operates within cofactor biosynthesis; NAD(+) biosynthesis; NAD(+) from deamido-NAD(+) (ammonia route): step 1/1. In terms of biological role, catalyzes the ATP-dependent amidation of deamido-NAD to form NAD. Uses ammonia as a nitrogen source. The sequence is that of NH(3)-dependent NAD(+) synthetase from Bacillus pumilus (strain SAFR-032).